Here is a 251-residue protein sequence, read N- to C-terminus: Probable transcriptional regulatory protein Pmob_0807 (251 aa).

Positions 1–22 are disordered; that stretch reads MSGHNKWANIKHRKGAQDAKRS.

This sequence belongs to the TACO1 family.

The protein resides in the cytoplasm. This chain is Probable transcriptional regulatory protein Pmob_0807, found in Petrotoga mobilis (strain DSM 10674 / SJ95).